We begin with the raw amino-acid sequence, 263 residues long: tRNA pseudouridine synthase A (263 aa).

Aspartate 57 functions as the Nucleophile in the catalytic mechanism. Tyrosine 115 provides a ligand contact to substrate.

Belongs to the tRNA pseudouridine synthase TruA family. As to quaternary structure, homodimer.

The catalysed reaction is uridine(38/39/40) in tRNA = pseudouridine(38/39/40) in tRNA. In terms of biological role, formation of pseudouridine at positions 38, 39 and 40 in the anticodon stem and loop of transfer RNAs. The sequence is that of tRNA pseudouridine synthase A from Buchnera aphidicola subsp. Schizaphis graminum (strain Sg).